A 417-amino-acid chain; its full sequence is Sulfate adenylyltransferase (417 aa).

It belongs to the sulfate adenylyltransferase family.

The catalysed reaction is sulfate + ATP + H(+) = adenosine 5'-phosphosulfate + diphosphate. It functions in the pathway sulfur metabolism; hydrogen sulfide biosynthesis; sulfite from sulfate: step 1/3. This is Sulfate adenylyltransferase from Psychrobacter cryohalolentis (strain ATCC BAA-1226 / DSM 17306 / VKM B-2378 / K5).